We begin with the raw amino-acid sequence, 1039 residues long: Pleckstrin homology domain-containing family G member 5 (1039 aa).

2 disordered regions span residues 58–105 (NVST…RRHT) and 185–277 (PGDE…SSES). Basic and acidic residues-rich tracts occupy residues 185 to 199 (PGDE…KDSK) and 217 to 228 (ERVDPQSRRESS). Residues 259–277 (SSCSLPVGSSVGSSGSSES) are compositionally biased toward low complexity. A DH domain is found at 372–564 (HQQEAVWELL…ERFIHHVNTC (193 aa)). The region spanning 620 to 720 (QLLLEGSLRM…WVDTLYNAQN (101 aa)) is the PH domain. 2 disordered regions span residues 739 to 785 (QHLQ…ASDG) and 800 to 836 (TLSS…LLPL). Over residues 744-757 (LEEEEDEQEEEGEE) the composition is skewed to acidic residues. Composition is skewed to polar residues over residues 758-776 (SGTS…SNSL) and 811-831 (FSSQ…TPTS). The residue at position 760 (Thr-760) is a Phosphothreonine. A Phosphoserine modification is found at Ser-765. Thr-876 carries the phosphothreonine modification. A phosphoserine mark is found at Ser-878, Ser-903, and Ser-908. Positions 967–989 (PLSESENRPSHKAGGPADSARRK) are disordered.

In terms of assembly, interacts with GIPC1/synectin and RHOA. Selectively expressed in cortical and hippocampal neurons with prominent expression in the cell bodies and dendrites. Weakly expressed in rat fad pad ECs (RFPECs).

It is found in the cytoplasm. The protein resides in the perinuclear region. It localises to the cell membrane. The protein localises to the cell junction. Its subcellular location is the cell projection. It is found in the lamellipodium. Its function is as follows. Functions as a guanine exchange factor (GEF) for RAB26 and thus regulates autophagy of synaptic vesicles in axon terminal of motoneurons. Involved in the control of neuronal cell differentiation. Plays a role in angiogenesis through regulation of endothelial cells chemotaxis. Also affects the migration, adhesion, and matrix/bone degradation in macrophages and osteoclasts. The polypeptide is Pleckstrin homology domain-containing family G member 5 (Plekhg5) (Rattus norvegicus (Rat)).